The chain runs to 206 residues: Synaptosomal-associated protein 25 (206 aa).

The segment covering 1–20 (MAEDADMRNELEEMQRRADQ) has biased composition (basic and acidic residues). The disordered stretch occupies residues 1–23 (MAEDADMRNELEEMQRRADQLAD). Positions 19-81 (DQLADESLES…KEAEKNLTDL (63 aa)) constitute a t-SNARE coiled-coil homology 1 domain. S-palmitoyl cysteine attachment occurs at residues C85, C88, C90, and C92. A Phosphothreonine modification is found at T138. Positions 140 to 202 (DARENEMDEN…DEANQRATKM (63 aa)) constitute a t-SNARE coiled-coil homology 2 domain. Position 187 is a phosphoserine (S187).

This sequence belongs to the SNAP-25 family. Part of the SNARE core complex containing SNAP25, VAMP2 and STX1A. This complex binds CPLX1. Interacts with TRIM9, RIMS1 and SNAPIN. Binds STXBP6. Found in a ternary complex with STX1A and VAMP8. Associates with the BLOC-1 complex. Isoform 1 and isoform 2 interact with BLOC1S6. Interacts with alpha-synuclein/SNCA. Palmitoylated. Cys-85 appears to be the main site, and palmitoylation is required for membrane association.

It is found in the membrane. The protein resides in the synapse. Its subcellular location is the synaptosome. The protein localises to the cell membrane. T-SNARE involved in the molecular regulation of neurotransmitter release. May play an important role in the synaptic function of specific neuronal systems. Associates with proteins involved in vesicle docking and membrane fusion. In Gallus gallus (Chicken), this protein is Synaptosomal-associated protein 25 (SNAP25).